Here is a 402-residue protein sequence, read N- to C-terminus: Arginine deiminase (402 aa).

Cys392 (amidino-cysteine intermediate) is an active-site residue.

Belongs to the arginine deiminase family.

The protein localises to the cytoplasm. It carries out the reaction L-arginine + H2O = L-citrulline + NH4(+). It participates in amino-acid degradation; L-arginine degradation via ADI pathway; carbamoyl phosphate from L-arginine: step 1/2. This Mycolicibacterium gilvum (strain PYR-GCK) (Mycobacterium gilvum (strain PYR-GCK)) protein is Arginine deiminase.